Consider the following 190-residue polypeptide: Imidazoleglycerol-phosphate dehydratase (190 aa).

Belongs to the imidazoleglycerol-phosphate dehydratase family.

The protein resides in the cytoplasm. It carries out the reaction D-erythro-1-(imidazol-4-yl)glycerol 3-phosphate = 3-(imidazol-4-yl)-2-oxopropyl phosphate + H2O. It participates in amino-acid biosynthesis; L-histidine biosynthesis; L-histidine from 5-phospho-alpha-D-ribose 1-diphosphate: step 6/9. The protein is Imidazoleglycerol-phosphate dehydratase of Methanococcus maripaludis (strain C5 / ATCC BAA-1333).